The primary structure comprises 188 residues: Elongation factor P-like protein (188 aa).

Belongs to the elongation factor P family.

In Vibrio campbellii (strain ATCC BAA-1116), this protein is Elongation factor P-like protein.